The following is a 496-amino-acid chain: Probable G-protein coupled receptor K01A12.3 (496 aa).

The Extracellular portion of the chain corresponds to 1–19 (MESVTRHRADMISFFTFDS). Residues 20 to 40 (YISIVGVAYTAVGLLGVFCNV) form a helical membrane-spanning segment. Over 41-58 (TTVIMILTNRVFRLSAYT) the chain is Cytoplasmic. The helical transmembrane segment at 59–79 (IMANVALADSIVMLIAGVACG) threads the bilayer. The Extracellular portion of the chain corresponds to 80-128 (MDVMWPNPNDLTSFIPSLEEPYQKIAPVSLRNDSKTDSSAAGFETGNIH). Asn-111 is a glycosylation site (N-linked (GlcNAc...) asparagine). The helical transmembrane segment at 129–149 (AVLSFSFVAAWTAGVISYAML) threads the bilayer. The Cytoplasmic portion of the chain corresponds to 150–169 (GTNRCIAICYYGTKARALNQ). Residues 170 to 190 (VSVAVACSASTWIVGIAAALV) traverse the membrane as a helical segment. Topologically, residues 191–216 (GTLSQPMIGIQRTMWSISFLEPRPHT) are extracellular. The helical transmembrane segment at 217-237 (TLFFTLLCAANLLGLGAQWVC) threads the bilayer. Over 238 to 285 (STLVLLKIRQVKKKISKNKLNQNSANRFRKQVILALNEIIVTGNFKAR) the chain is Cytoplasmic. The helical transmembrane segment at 286–306 (LTFQFFYPSILCTISTFLFFI) threads the bilayer. The Extracellular segment spans residues 307 to 318 (KPYAFEYLSGWQ). The chain crosses the membrane as a helical span at residues 319–339 (LVILHLLWLCNHTCNPFIYAY). The Cytoplasmic segment spans residues 340–496 (FNDRMRLTYK…WVKFAKKASI (157 aa)). The disordered stretch occupies residues 451–470 (TKELESAHNQGGSSRFDSER).

Belongs to the G-protein coupled receptor 1 family.

The protein resides in the cell membrane. The polypeptide is Probable G-protein coupled receptor K01A12.3 (Caenorhabditis elegans).